Here is a 1012-residue protein sequence, read N- to C-terminus: Structural polyprotein (1012 aa).

Residue Asp30 coordinates a divalent metal cation. The Peptidase S50 domain occupies 513-755 (ADKGYEVVAN…AGRQYHLAMA (243 aa)). Ser652 functions as the Nucleophile in the catalytic mechanism. Lys692 is a catalytic residue. Disordered regions lie at residues 837–857 (GYGVEARGPTPEEAQRKKDTR) and 968–1012 (TAME…EDLE). The span at 975 to 986 (RNPRRAPPKPKP) shows a compositional bias: basic residues. The interval 1003-1012 (IRTVSDEDLE) is interaction with VP1 protein.

Homotrimer. A central divalent metal stabilizes the VP2 trimer. Interacts with host ITGA4/ITGB1. In terms of assembly, homodimer. Interacts (via C-terminus) with VP1 in the cytoplasm. Interacts with VP2. Specific enzymatic cleavages yield mature proteins. The capsid assembly seems to be regulated by polyprotein processing. The protease VP4 cleaves itself off the polyprotein, thus releasing pre-VP2 and VP3 within the infected cell. During capsid assembly, the C-terminus of pre-VP2 is further processed by VP4, giving rise to VP2, the external capsid protein and three small peptides that all stay closely associated with the capsid.

The protein localises to the virion. The protein resides in the host cytoplasm. Functionally, capsid protein VP2 self assembles to form an icosahedral capsid with a T=13 symmetry, about 70 nm in diameter, and consisting of 260 VP2 trimers. The capsid encapsulates the genomic dsRNA. VP2 is also involved in attachment and entry into the host cell by interacting with host ITGA4/ITGB1. In terms of biological role, the precursor of VP2 plays an important role in capsid assembly. First, pre-VP2 and VP2 oligomers assemble to form a procapsid. Then, the pre-VP2 intermediates may be processed into VP2 proteins by proteolytic cleavage mediated by VP4 to obtain the mature virion. The final capsid is composed of pentamers and hexamers but VP2 has a natural tendency to assemble into all-pentameric structures. Therefore pre-VP2 may be required to allow formation of the hexameric structures. Its function is as follows. Protease VP4 is a serine protease that cleaves the polyprotein into its final products. Pre-VP2 is first partially cleaved, and may be completely processed by VP4 upon capsid maturation. Capsid protein VP3 plays a key role in virion assembly by providing a scaffold for the capsid made of VP2. May self-assemble to form a T=4-like icosahedral inner-capsid composed of at least 180 trimers. Plays a role in genomic RNA packaging by recruiting VP1 into the capsid and interacting with the dsRNA genome segments to form a ribonucleoprotein complex. Additionally, the interaction of the VP3 C-terminal tail with VP1 removes the inherent structural blockade of the polymerase active site. Thus, VP3 can also function as a transcriptional activator. Functionally, structural peptide 1 is a small peptide derived from pre-VP2 C-terminus. It destabilizes and perforates cell membranes, suggesting a role during entry. In terms of biological role, structural peptide 2 is a small peptide derived from pVP2 C-terminus. It is not essential for the virus viability, but viral growth is affected when missing. Its function is as follows. Structural peptide 3 is a small peptide derived from pVP2 C-terminus. It is not essential for the virus viability, but viral growth is affected when missing. Structural peptide 4 is a small peptide derived from pVP2 C-terminus. It is essential for the virus viability. This is Structural polyprotein from Gallus gallus (Chicken).